Consider the following 587-residue polypeptide: Arginine--tRNA ligase (587 aa).

Residues 126–136 (ANPTGPLHVGH) carry the 'HIGH' region motif.

It belongs to the class-I aminoacyl-tRNA synthetase family. Monomer.

The protein resides in the cytoplasm. It carries out the reaction tRNA(Arg) + L-arginine + ATP = L-arginyl-tRNA(Arg) + AMP + diphosphate. In Azoarcus sp. (strain BH72), this protein is Arginine--tRNA ligase.